A 307-amino-acid polypeptide reads, in one-letter code: Ribonuclease HIII (307 aa).

Residues Met-93–Leu-307 enclose the RNase H type-2 domain. A divalent metal cation-binding residues include Asp-99, Glu-100, and Asp-204.

This sequence belongs to the RNase HII family. RnhC subfamily. Mn(2+) serves as cofactor. The cofactor is Mg(2+).

It localises to the cytoplasm. The enzyme catalyses Endonucleolytic cleavage to 5'-phosphomonoester.. In terms of biological role, endonuclease that specifically degrades the RNA of RNA-DNA hybrids. This Bacillus pumilus (strain SAFR-032) protein is Ribonuclease HIII.